Consider the following 59-residue polypeptide: Potassium channel toxin alpha-KTx 1.14 (59 aa).

Residues methionine 1 to glycine 22 form the signal peptide. Glutamine 23 carries the post-translational modification Pyrrolidone carboxylic acid. 3 disulfide bridges follow: cysteine 29/cysteine 50, cysteine 35/cysteine 55, and cysteine 39/cysteine 57.

It belongs to the short scorpion toxin superfamily. Potassium channel inhibitor family. Alpha-KTx 01 subfamily. In terms of tissue distribution, expressed by the venom gland.

Its subcellular location is the secreted. Its function is as follows. Potent blocker of both large-conductance calcium-activated potassium channels (KCa1.1/KCNMA1) and voltage-gated potassium channels (Kv1.3/KCNA3 and ERG1/Kv11.1/KCNH2). This chain is Potassium channel toxin alpha-KTx 1.14, found in Olivierus martensii (Manchurian scorpion).